Consider the following 199-residue polypeptide: uncharacterized protein (199 aa).

An N-terminal signal peptide occupies residues 1–23 (MSARAPKELRLALPPCLLNRTFA). N-linked (GlcNAc...) asparagine glycosylation is found at Asn-19 and Asn-26. The Extracellular segment spans residues 24–60 (SHNASGGSSAGLRSSGAGGGTCITQVGQQLFQSFSST). A helical membrane pass occupies residues 61–81 (LVLIVLVTLIFCLLVLSLSTF). Residues 82–199 (HIHKRRMKKR…EGLLQTVVLS (118 aa)) are Cytoplasmic-facing. Positions 93–190 (MQRAQEEYER…ASSCLDTPGE (98 aa)) are disordered. 2 stretches are compositionally biased toward basic and acidic residues: residues 95–106 (RAQEEYERDHCS) and 124–135 (HGKETRLERQPR). Positions 147-163 (SSSSSSSSSPGLLCQGP) are enriched in low complexity. Over residues 164-176 (CAPPPPLPAPTPQ) the composition is skewed to pro residues.

It localises to the membrane. This is an uncharacterized protein from Mus musculus (Mouse).